Reading from the N-terminus, the 222-residue chain is UPF0758 protein YicR (222 aa).

An MPN domain is found at 100 to 222; that stretch reads PLLSPEMTRE…YVSFAERGWI (123 aa). Residues His-171, His-173, and Asp-184 each contribute to the Zn(2+) site. The JAMM motif motif lies at 171 to 184; it reads HNHPSGCAEPSKAD.

The protein belongs to the UPF0758 family. YicR subfamily.

In Shigella dysenteriae serotype 1 (strain Sd197), this protein is UPF0758 protein YicR.